A 354-amino-acid polypeptide reads, in one-letter code: Protein-arginine kinase (354 aa).

Residues 24-254 (IVLSSRIRLA…QQIIQQEKMA (231 aa)) form the Phosphagen kinase C-terminal domain. Residues 27 to 31 (SSRIR), H92, R125, 176 to 180 (RASVM), and 207 to 212 (RGIYGE) contribute to the ATP site. The RDXXRA motif of the pArg binding pocket involved in allosteric regulation signature appears at 337–342 (RDYRRA).

It belongs to the ATP:guanido phosphotransferase family.

It catalyses the reaction L-arginyl-[protein] + ATP = N(omega)-phospho-L-arginyl-[protein] + ADP + H(+). With respect to regulation, appears to be allosterically activated by the binding of pArg-containing polypeptides to the pArg-binding pocket localized in the C-terminal domain of McsB. In terms of biological role, catalyzes the specific phosphorylation of arginine residues in a large number of proteins. Is part of the bacterial stress response system. Protein arginine phosphorylation has a physiologically important role and is involved in the regulation of many critical cellular processes, such as protein homeostasis, motility, competence, and stringent and stress responses, by regulating gene expression and protein activity. The chain is Protein-arginine kinase from Bacillus cereus (strain G9842).